Consider the following 513-residue polypeptide: Glutamate--tRNA ligase 2 (513 aa).

Residues 11-21 carry the 'HIGH' region motif; that stretch reads PSPSGFLHIGS. The 'KMSKS' region motif lies at 240–244; that stretch reads KLSKR. ATP is bound at residue Lys-243.

It belongs to the class-I aminoacyl-tRNA synthetase family. Glutamate--tRNA ligase type 1 subfamily. As to quaternary structure, monomer.

It is found in the cytoplasm. The catalysed reaction is tRNA(Glu) + L-glutamate + ATP = L-glutamyl-tRNA(Glu) + AMP + diphosphate. Its function is as follows. Catalyzes the attachment of glutamate to tRNA(Glu) in a two-step reaction: glutamate is first activated by ATP to form Glu-AMP and then transferred to the acceptor end of tRNA(Glu). The polypeptide is Glutamate--tRNA ligase 2 (Rickettsia massiliae (strain Mtu5)).